A 416-amino-acid chain; its full sequence is Dihydrolipoyllysine-residue succinyltransferase component of 2-oxoglutarate dehydrogenase complex (416 aa).

The Lipoyl-binding domain maps to 3–78; sequence IVDVKVPQLS…VADEIIAKID (76 aa). The residue at position 44 (Lys-44) is an N6-lipoyllysine. One can recognise a Peripheral subunit-binding (PSBD) domain in the interval 115-152; that stretch reads VAMPSAAKLMAEAGLSAGQVAGTGKDGRITKGDALAAA. Catalysis depends on residues His-387 and Asp-391.

Belongs to the 2-oxoacid dehydrogenase family. As to quaternary structure, forms a 24-polypeptide structural core with octahedral symmetry. Part of the 2-oxoglutarate dehydrogenase (OGDH) complex composed of E1 (2-oxoglutarate dehydrogenase), E2 (dihydrolipoamide succinyltransferase) and E3 (dihydrolipoamide dehydrogenase); the complex contains multiple copies of the three enzymatic components (E1, E2 and E3). Requires (R)-lipoate as cofactor.

It carries out the reaction N(6)-[(R)-dihydrolipoyl]-L-lysyl-[protein] + succinyl-CoA = N(6)-[(R)-S(8)-succinyldihydrolipoyl]-L-lysyl-[protein] + CoA. Its pathway is amino-acid degradation; L-lysine degradation via saccharopine pathway; glutaryl-CoA from L-lysine: step 6/6. Its function is as follows. E2 component of the 2-oxoglutarate dehydrogenase (OGDH) complex which catalyzes the second step in the conversion of 2-oxoglutarate to succinyl-CoA and CO(2). This chain is Dihydrolipoyllysine-residue succinyltransferase component of 2-oxoglutarate dehydrogenase complex (sucB), found in Cupriavidus necator (strain ATCC 17699 / DSM 428 / KCTC 22496 / NCIMB 10442 / H16 / Stanier 337) (Ralstonia eutropha).